The following is a 262-amino-acid chain: Inactive snake venom serine proteinase 13 (262 aa).

An N-terminal signal peptide occupies residues 1 to 18 (MGLIRVLANLLILQLSYA). A propeptide spanning residues 19–24 (QKSSEL) is cleaved from the precursor. Residues 25 to 250 (VIGGDECNIN…HLDWIQSIIA (226 aa)) enclose the Peptidase S1 domain. Disulfide bonds link cysteine 31/cysteine 162, cysteine 49/cysteine 65, cysteine 97/cysteine 257, cysteine 141/cysteine 211, cysteine 173/cysteine 190, and cysteine 201/cysteine 226. 3 N-linked (GlcNAc...) asparagine glycosylation sites follow: asparagine 78, asparagine 102, and asparagine 153.

It belongs to the peptidase S1 family. Snake venom subfamily. As to quaternary structure, monomer. Expressed by the venom gland.

Its subcellular location is the secreted. The polypeptide is Inactive snake venom serine proteinase 13 (Crotalus adamanteus (Eastern diamondback rattlesnake)).